The primary structure comprises 714 residues: Fatty acid oxidation complex subunit alpha (714 aa).

The segment at 1-190 (MEMASAFTLN…KLGLVDDVVP (190 aa)) is enoyl-CoA hydratase. Residues 306-714 (APLNSVGILG…FWKTTATDLQ (409 aa)) form a 3-hydroxyacyl-CoA dehydrogenase region.

The protein in the N-terminal section; belongs to the enoyl-CoA hydratase/isomerase family. It in the central section; belongs to the 3-hydroxyacyl-CoA dehydrogenase family. As to quaternary structure, heterotetramer of two alpha chains (FadJ) and two beta chains (FadI).

The protein resides in the cytoplasm. It catalyses the reaction a (3S)-3-hydroxyacyl-CoA = a (2E)-enoyl-CoA + H2O. The enzyme catalyses a 4-saturated-(3S)-3-hydroxyacyl-CoA = a (3E)-enoyl-CoA + H2O. The catalysed reaction is a (3S)-3-hydroxyacyl-CoA + NAD(+) = a 3-oxoacyl-CoA + NADH + H(+). It carries out the reaction (3S)-3-hydroxybutanoyl-CoA = (3R)-3-hydroxybutanoyl-CoA. The protein operates within lipid metabolism; fatty acid beta-oxidation. Its function is as follows. Catalyzes the formation of a hydroxyacyl-CoA by addition of water on enoyl-CoA. Also exhibits 3-hydroxyacyl-CoA epimerase and 3-hydroxyacyl-CoA dehydrogenase activities. The polypeptide is Fatty acid oxidation complex subunit alpha (Shigella boydii serotype 18 (strain CDC 3083-94 / BS512)).